A 312-amino-acid polypeptide reads, in one-letter code: Glycine--tRNA ligase alpha subunit (312 aa).

Belongs to the class-II aminoacyl-tRNA synthetase family. As to quaternary structure, tetramer of two alpha and two beta subunits.

The protein localises to the cytoplasm. It catalyses the reaction tRNA(Gly) + glycine + ATP = glycyl-tRNA(Gly) + AMP + diphosphate. The polypeptide is Glycine--tRNA ligase alpha subunit (Nostoc punctiforme (strain ATCC 29133 / PCC 73102)).